Consider the following 382-residue polypeptide: Succinyl-diaminopimelate desuccinylase (382 aa).

His-68 lines the Zn(2+) pocket. The active site involves Asp-70. Asp-101 contributes to the Zn(2+) binding site. Glu-135 acts as the Proton acceptor in catalysis. Zn(2+)-binding residues include Glu-136, Glu-164, and His-350.

The protein belongs to the peptidase M20A family. DapE subfamily. Homodimer. The cofactor is Zn(2+). Co(2+) is required as a cofactor.

It catalyses the reaction N-succinyl-(2S,6S)-2,6-diaminopimelate + H2O = (2S,6S)-2,6-diaminopimelate + succinate. It participates in amino-acid biosynthesis; L-lysine biosynthesis via DAP pathway; LL-2,6-diaminopimelate from (S)-tetrahydrodipicolinate (succinylase route): step 3/3. In terms of biological role, catalyzes the hydrolysis of N-succinyl-L,L-diaminopimelic acid (SDAP), forming succinate and LL-2,6-diaminopimelate (DAP), an intermediate involved in the bacterial biosynthesis of lysine and meso-diaminopimelic acid, an essential component of bacterial cell walls. The chain is Succinyl-diaminopimelate desuccinylase from Acidithiobacillus ferrooxidans (strain ATCC 23270 / DSM 14882 / CIP 104768 / NCIMB 8455) (Ferrobacillus ferrooxidans (strain ATCC 23270)).